Reading from the N-terminus, the 273-residue chain is Probable ribosomal RNA small subunit methyltransferase A (273 aa).

S-adenosyl-L-methionine contacts are provided by asparagine 23, leucine 25, glycine 50, glutamate 71, aspartate 95, and asparagine 110.

It belongs to the class I-like SAM-binding methyltransferase superfamily. rRNA adenine N(6)-methyltransferase family. RsmA subfamily.

It localises to the cytoplasm. Its function is as follows. Specifically dimethylates two adjacent adenosines in the loop of a conserved hairpin near the 3'-end of 16S rRNA in the 30S particle. May play a critical role in biogenesis of 30S subunits. The protein is Probable ribosomal RNA small subunit methyltransferase A of Pyrococcus furiosus (strain ATCC 43587 / DSM 3638 / JCM 8422 / Vc1).